Here is a 360-residue protein sequence, read N- to C-terminus: Phosphoserine aminotransferase (360 aa).

R41 contributes to the L-glutamate binding site. Pyridoxal 5'-phosphate is bound by residues W101, T152, D172, and Q195. K196 carries the N6-(pyridoxal phosphate)lysine modification. Residue 237–238 participates in pyridoxal 5'-phosphate binding; sequence NT.

This sequence belongs to the class-V pyridoxal-phosphate-dependent aminotransferase family. SerC subfamily. As to quaternary structure, homodimer. Pyridoxal 5'-phosphate is required as a cofactor.

The protein resides in the cytoplasm. The enzyme catalyses O-phospho-L-serine + 2-oxoglutarate = 3-phosphooxypyruvate + L-glutamate. It catalyses the reaction 4-(phosphooxy)-L-threonine + 2-oxoglutarate = (R)-3-hydroxy-2-oxo-4-phosphooxybutanoate + L-glutamate. Its pathway is amino-acid biosynthesis; L-serine biosynthesis; L-serine from 3-phospho-D-glycerate: step 2/3. It participates in cofactor biosynthesis; pyridoxine 5'-phosphate biosynthesis; pyridoxine 5'-phosphate from D-erythrose 4-phosphate: step 3/5. Its function is as follows. Catalyzes the reversible conversion of 3-phosphohydroxypyruvate to phosphoserine and of 3-hydroxy-2-oxo-4-phosphonooxybutanoate to phosphohydroxythreonine. This Burkholderia multivorans (strain ATCC 17616 / 249) protein is Phosphoserine aminotransferase.